The primary structure comprises 541 residues: Solute carrier family 22 member 10 (541 aa).

Residues 1-15 (MAFEELLSQVGGLGR) are Cytoplasmic-facing. The chain crosses the membrane as a helical span at residues 16–36 (FQMLHLVFILPSLMLLIPHIL). Topologically, residues 37-145 (LENFAAAIPG…DLVCDYQSLK (109 aa)) are extracellular. Residues N56 and N102 are each glycosylated (N-linked (GlcNAc...) asparagine). A helical membrane pass occupies residues 146-166 (SVVQFLLLTGMLVGGIIGGHV). The Cytoplasmic segment spans residues 167-193 (SDRFGRRFILRWCLLQLAITDTCAAFA). The helical transmembrane segment at 194-214 (PTFPVYCVLRFLAGFSSMIII) threads the bilayer. Residues 215–230 (SNNSLPITEWIRPNSK) are Extracellular-facing. Residues 231–251 (ALVVILSSGALSIGQIILGGL) form a helical membrane-spanning segment. Residues 252–259 (AYVFRDWQ) lie on the Cytoplasmic side of the membrane. Residues 260 to 280 (TLHVVASVPFFVFFLLSRWLV) form a helical membrane-spanning segment. Topologically, residues 281-349 (ESARWLIITN…LFRNPSMRKR (69 aa)) are extracellular. The chain crosses the membrane as a helical span at residues 350–370 (ICILVFLRFANTIPFYGTMVN). At 371-377 (LQHVGSN) the chain is on the cytoplasmic side. A helical transmembrane segment spans residues 378–398 (IFLLQVLYGAVALIVRCLALL). Residues 399 to 406 (TLNHMGRR) lie on the Extracellular side of the membrane. A helical transmembrane segment spans residues 407-427 (ISQILFMFLVGLSILANTFVP). The Cytoplasmic portion of the chain corresponds to 428-436 (KEMQTLRVA). Residues 437-457 (LACLGIGCSAATFSSVAVHFI) form a helical membrane-spanning segment. The Extracellular portion of the chain corresponds to 458-472 (ELIPTVLRARASGID). The helical transmembrane segment at 473-493 (LTASRIGAALAPLLMTLTVFF) threads the bilayer. At 494 to 495 (TT) the chain is on the cytoplasmic side. The chain crosses the membrane as a helical span at residues 496–516 (LPWIIYGIFPIIGGLIVFLLP). The Extracellular segment spans residues 517–541 (ETKNLPLPDTIKDVENQKKNLKEKA).

This sequence belongs to the major facilitator (TC 2.A.1) superfamily. Organic cation transporter (TC 2.A.1.19) family. Detected in fetal and adult liver, and in adult kidney.

It localises to the membrane. The sequence is that of Solute carrier family 22 member 10 (SLC22A10) from Homo sapiens (Human).